A 296-amino-acid polypeptide reads, in one-letter code: Small ribosomal subunit protein uS2m (296 aa).

Positions 274–296 (QGQKEPGDQGPAHPPGADMSHSL) are disordered.

It belongs to the universal ribosomal protein uS2 family. As to quaternary structure, component of the mitochondrial small ribosomal subunit (mt-SSU). Mature mammalian 55S mitochondrial ribosomes consist of a small (28S) and a large (39S) subunit. The 28S small subunit contains a 12S ribosomal RNA (12S mt-rRNA) and 30 different proteins. The 39S large subunit contains a 16S rRNA (16S mt-rRNA), a copy of mitochondrial valine transfer RNA (mt-tRNA(Val)), which plays an integral structural role, and 52 different proteins.

It localises to the mitochondrion. Its function is as follows. Required for mitoribosome formation and stability, and mitochondrial translation. This is Small ribosomal subunit protein uS2m (MRPS2) from Homo sapiens (Human).